A 258-amino-acid chain; its full sequence is uncharacterized protein (258 aa).

The signal sequence occupies residues 1–19 (MVGILPLCCSGCVPSLCCS). 3 helical membrane passes run 94–114 (GLLLPCLLGVGSWLLFNNWTG), 197–217 (CLILGIFLFCFVLAVIGLPYI), and 219–239 (PGLSLSVALLWQSLILLSSLV).

The protein resides in the membrane. This is an uncharacterized protein from Homo sapiens (Human).